The primary structure comprises 148 residues: Small ribosomal subunit protein uS15 (148 aa).

The segment at 1–23 (MRKSKEKGRSGSTRPPQLKKPEW) is disordered.

This sequence belongs to the universal ribosomal protein uS15 family. Part of the 30S ribosomal subunit.

In Thermofilum pendens (strain DSM 2475 / Hrk 5), this protein is Small ribosomal subunit protein uS15.